Consider the following 234-residue polypeptide: MGQKVNPHGLRVGVIKDWDAKWYANKRDFSDYLIEDHSIRKFVKKKLFLSGINKIETERAANNRVKINVHTAKPGMVIGKGGIGVEELRKELEKMTKKTVIVNVVEVKRPEVESQLVAENIAFSLERRVSFRRAMKQAMQRAMRAGAKGIKVSTAGRLGGADMARTEGYSEGNVPLHTLRADIDYGFAEADTTYGKLGIKVWIYKGEILPTKGKNEETNNETADNSRGRRREAK.

Residues 39 to 108 form the KH type-2 domain; that stretch reads IRKFVKKKLF…TVIVNVVEVK (70 aa). A disordered region spans residues 212–234; sequence KGKNEETNNETADNSRGRRREAK.

The protein belongs to the universal ribosomal protein uS3 family. As to quaternary structure, part of the 30S ribosomal subunit. Forms a tight complex with proteins S10 and S14.

Functionally, binds the lower part of the 30S subunit head. Binds mRNA in the 70S ribosome, positioning it for translation. This is Small ribosomal subunit protein uS3 from Alkaliphilus metalliredigens (strain QYMF).